The following is a 615-amino-acid chain: Isocitrate dehydrogenase kinase/phosphatase (615 aa).

ATP contacts are provided by residues 325–331 (APGIKGM) and K346. D381 is a catalytic residue.

The protein belongs to the AceK family.

It is found in the cytoplasm. It catalyses the reaction L-seryl-[isocitrate dehydrogenase] + ATP = O-phospho-L-seryl-[isocitrate dehydrogenase] + ADP + H(+). Functionally, bifunctional enzyme which can phosphorylate or dephosphorylate isocitrate dehydrogenase (IDH) on a specific serine residue. This is a regulatory mechanism which enables bacteria to bypass the Krebs cycle via the glyoxylate shunt in response to the source of carbon. When bacteria are grown on glucose, IDH is fully active and unphosphorylated, but when grown on acetate or ethanol, the activity of IDH declines drastically concomitant with its phosphorylation. This Albidiferax ferrireducens (strain ATCC BAA-621 / DSM 15236 / T118) (Rhodoferax ferrireducens) protein is Isocitrate dehydrogenase kinase/phosphatase.